The sequence spans 295 residues: uncharacterized protein (295 aa).

The ABC transporter domain maps to 2–226 (LSIESLCKSY…QQTNVFTLSV (225 aa)). 34–41 (GPNGAGKT) contributes to the ATP binding site.

The protein belongs to the ABC transporter superfamily.

This is an uncharacterized protein from Bacillus subtilis (strain 168).